A 150-amino-acid chain; its full sequence is Deoxyuridine 5'-triphosphate nucleotidohydrolase (150 aa).

Substrate-binding positions include arginine 69–glycine 71, asparagine 82, and threonine 86–aspartate 88.

Belongs to the dUTPase family. The cofactor is Mg(2+).

It catalyses the reaction dUTP + H2O = dUMP + diphosphate + H(+). Its pathway is pyrimidine metabolism; dUMP biosynthesis; dUMP from dCTP (dUTP route): step 2/2. In terms of biological role, this enzyme is involved in nucleotide metabolism: it produces dUMP, the immediate precursor of thymidine nucleotides and it decreases the intracellular concentration of dUTP so that uracil cannot be incorporated into DNA. This is Deoxyuridine 5'-triphosphate nucleotidohydrolase from Syntrophus aciditrophicus (strain SB).